Here is a 274-residue protein sequence, read N- to C-terminus: Bis(5'-nucleosyl)-tetraphosphatase, symmetrical (274 aa).

The protein belongs to the Ap4A hydrolase family.

The catalysed reaction is P(1),P(4)-bis(5'-adenosyl) tetraphosphate + H2O = 2 ADP + 2 H(+). Hydrolyzes diadenosine 5',5'''-P1,P4-tetraphosphate to yield ADP. The polypeptide is Bis(5'-nucleosyl)-tetraphosphatase, symmetrical (Buchnera aphidicola subsp. Acyrthosiphon pisum (strain 5A)).